The sequence spans 128 residues: Gastrotropin (128 aa).

Ala-2 bears the N-acetylalanine mark.

Belongs to the calycin superfamily. Fatty-acid binding protein (FABP) family. In terms of tissue distribution, expressed in ovary granulosa and luteal cells.

It localises to the cytoplasm. The protein resides in the membrane. Functionally, binds to bile acids and is involved in enterohepatic bile acid metabolism. Required for efficient apical to basolateral transport of conjugated bile acids in ileal enterocytes. Stimulates gastric acid and pepsinogen secretion. The protein is Gastrotropin (Fabp6) of Mus musculus (Mouse).